Reading from the N-terminus, the 716-residue chain is Amino-acid acetyltransferase, mitochondrial (716 aa).

The transit peptide at 1–44 (MSLHTGWPRTVNSSFLKKHRSSLCTCQHTSSVLPRSFSTTPDRH) directs the protein to the mitochondrion. A compositionally biased stretch (polar residues) spans 37–56 (FSTTPDRHVQQSADFSSTSR). Disordered regions lie at residues 37 to 58 (FSTT…SRSY) and 96 to 121 (KAQH…TLPS). Over residues 101–112 (KSPDANKPEPEK) the composition is skewed to basic and acidic residues. One can recognise an N-acetyltransferase domain in the interval 537–706 (SRPRLKLDDP…YEAVCRSIQP (170 aa)).

It belongs to the acetyltransferase family.

It is found in the mitochondrion. It catalyses the reaction L-glutamate + acetyl-CoA = N-acetyl-L-glutamate + CoA + H(+). It participates in amino-acid biosynthesis; L-arginine biosynthesis; N(2)-acetyl-L-ornithine from L-glutamate: step 1/4. N-acetylglutamate synthase involved in arginine biosynthesis. This is Amino-acid acetyltransferase, mitochondrial (arg2) from Aspergillus fumigatus (strain CBS 144.89 / FGSC A1163 / CEA10) (Neosartorya fumigata).